The chain runs to 567 residues: Potassium-transporting ATPase potassium-binding subunit (567 aa).

The next 11 membrane-spanning stretches (helical) occupy residues 5 to 25 (GWIQ…PLGF), 64 to 84 (TAYA…LYAL), 136 to 156 (GLTV…IALI), 179 to 199 (LYVL…LGIP), 254 to 274 (ISNL…TNVF), 285 to 305 (WAIL…CYWA), 330 to 350 (FGIA…CGAV), 357 to 376 (FTAL…EVIV), 421 to 441 (MLAI…AVVL), 486 to 506 (ITIG…ALAI), and 529 to 549 (LFVG…FFPA).

It belongs to the KdpA family. The system is composed of three essential subunits: KdpA, KdpB and KdpC.

Its subcellular location is the cell inner membrane. Its function is as follows. Part of the high-affinity ATP-driven potassium transport (or Kdp) system, which catalyzes the hydrolysis of ATP coupled with the electrogenic transport of potassium into the cytoplasm. This subunit binds the periplasmic potassium ions and delivers the ions to the membrane domain of KdpB through an intramembrane tunnel. The polypeptide is Potassium-transporting ATPase potassium-binding subunit (Mesorhizobium japonicum (strain LMG 29417 / CECT 9101 / MAFF 303099) (Mesorhizobium loti (strain MAFF 303099))).